Here is a 106-residue protein sequence, read N- to C-terminus: Small ribosomal subunit protein uS10 (106 aa).

This sequence belongs to the universal ribosomal protein uS10 family. In terms of assembly, part of the 30S ribosomal subunit.

Its function is as follows. Involved in the binding of tRNA to the ribosomes. This chain is Small ribosomal subunit protein uS10, found in Parasynechococcus marenigrum (strain WH8102).